Consider the following 161-residue polypeptide: Endoribonuclease YbeY (161 aa).

Zn(2+) is bound by residues histidine 121, histidine 125, and histidine 131.

The protein belongs to the endoribonuclease YbeY family. Zn(2+) serves as cofactor.

The protein resides in the cytoplasm. Single strand-specific metallo-endoribonuclease involved in late-stage 70S ribosome quality control and in maturation of the 3' terminus of the 16S rRNA. The polypeptide is Endoribonuclease YbeY (Xylella fastidiosa (strain M23)).